The chain runs to 611 residues: Protein Spindly-A (611 aa).

Positions 1–390 (MEESETVLKL…KENEKIKDEL (390 aa)) form a coiled coil. Residues 487 to 611 (TCTAESTDGR…PNATTQCPQQ (125 aa)) form a disordered region. The span at 493–511 (TDGRIHSKEDLSLSTKEQD) shows a compositional bias: basic and acidic residues. Positions 552 to 567 (HNCSVTSASPRSTSED) are enriched in polar residues. The segment covering 570–583 (SESKRFDEEQEKRK) has biased composition (basic and acidic residues). The segment covering 602–611 (PNATTQCPQQ) has biased composition (polar residues).

It belongs to the Spindly family.

Its subcellular location is the chromosome. It localises to the centromere. The protein resides in the kinetochore. Its function is as follows. Required for the localization of dynein and dynactin to the mitotic kintochore. Dynein is believed to control the initial lateral interaction between the kinetochore and spindle microtubules and to facilitate the subsequent formation of end-on kinetochore-microtubule attachments mediated by the NDC80 complex. The chain is Protein Spindly-A (spdl1-a) from Xenopus laevis (African clawed frog).